A 222-amino-acid polypeptide reads, in one-letter code: MSAVINKEALLAKIEEALRRGKPRRFRQSVELILVLREVDLSKPENRINLLVELPHPPKPNKVAAFAHGAFEVQAKNAGVDAVISRDQVEGLSGNKRAIRKLAKQYDFFIAPPDLMPLLGRVVGPIFGPRGKMPEVAPPNVDVKSLVERLRRSVRVKLRNEPVIKVRIGAEGQKPEEVLENALAVLEDVNRKFSLRQYLKDVYIKKTMGPPVKAKALEVLAR.

It belongs to the universal ribosomal protein uL1 family. In terms of assembly, part of the 50S ribosomal subunit.

Its function is as follows. Binds directly to 23S rRNA. Probably involved in E site tRNA release. In terms of biological role, protein L1 is also a translational repressor protein, it controls the translation of its operon by binding to its mRNA. The sequence is that of Large ribosomal subunit protein uL1 from Pyrobaculum neutrophilum (strain DSM 2338 / JCM 9278 / NBRC 100436 / V24Sta) (Thermoproteus neutrophilus).